Here is a 131-residue protein sequence, read N- to C-terminus: Profilin-2 (131 aa).

Cysteine 13 and cysteine 115 are oxidised to a cystine. The short motif at 81-97 (AVIRGKKGSGGITVKKT) is the Involved in PIP2 interaction element. Threonine 111 carries the post-translational modification Phosphothreonine.

The protein belongs to the profilin family. In terms of assembly, occurs in many kinds of cells as a complex with monomeric actin in a 1:1 ratio. Post-translationally, phosphorylated by MAP kinases. In terms of tissue distribution, pollen specific.

It localises to the cytoplasm. Its subcellular location is the cytoskeleton. In terms of biological role, binds to actin and affects the structure of the cytoskeleton. At high concentrations, profilin prevents the polymerization of actin, whereas it enhances it at low concentrations. By binding to PIP2, it inhibits the formation of IP3 and DG. This chain is Profilin-2 (PRO2), found in Zea mays (Maize).